The sequence spans 476 residues: ATP synthase subunit beta (476 aa).

ATP is bound at residue 154–161; that stretch reads GGAGVGKT.

The protein belongs to the ATPase alpha/beta chains family. F-type ATPases have 2 components, CF(1) - the catalytic core - and CF(0) - the membrane proton channel. CF(1) has five subunits: alpha(3), beta(3), gamma(1), delta(1), epsilon(1). CF(0) has four main subunits: a(1), b(1), b'(1) and c(9-12).

It localises to the cell inner membrane. It carries out the reaction ATP + H2O + 4 H(+)(in) = ADP + phosphate + 5 H(+)(out). In terms of biological role, produces ATP from ADP in the presence of a proton gradient across the membrane. The catalytic sites are hosted primarily by the beta subunits. The protein is ATP synthase subunit beta of Rhodopseudomonas palustris (strain ATCC BAA-98 / CGA009).